Here is a 158-residue protein sequence, read N- to C-terminus: Transcription antitermination protein NusB (158 aa).

Over residues 1–13 (MSEAGDTSPQPGK) the composition is skewed to polar residues. The segment at 1 to 24 (MSEAGDTSPQPGKTGQPKAGDRRR) is disordered.

Belongs to the NusB family.

Functionally, involved in transcription antitermination. Required for transcription of ribosomal RNA (rRNA) genes. Binds specifically to the boxA antiterminator sequence of the ribosomal RNA (rrn) operons. This Marinobacter nauticus (strain ATCC 700491 / DSM 11845 / VT8) (Marinobacter aquaeolei) protein is Transcription antitermination protein NusB.